A 138-amino-acid polypeptide reads, in one-letter code: Acidic phospholipase A2 6 (138 aa).

Residues methionine 1–glycine 16 form the signal peptide. 7 disulfides stabilise this stretch: cysteine 42–cysteine 131, cysteine 44–cysteine 60, cysteine 59–cysteine 111, cysteine 65–cysteine 138, cysteine 66–cysteine 104, cysteine 73–cysteine 97, and cysteine 91–cysteine 102. 3 residues coordinate Ca(2+): tyrosine 43, glycine 45, and glycine 47. The active site involves histidine 63. Aspartate 64 contributes to the Ca(2+) binding site. Aspartate 105 is a catalytic residue.

This sequence belongs to the phospholipase A2 family. Group II subfamily. D49 sub-subfamily. In terms of assembly, homodimer. It depends on Ca(2+) as a cofactor. In terms of tissue distribution, expressed by the venom gland.

The protein localises to the secreted. It carries out the reaction a 1,2-diacyl-sn-glycero-3-phosphocholine + H2O = a 1-acyl-sn-glycero-3-phosphocholine + a fatty acid + H(+). In terms of biological role, snake venom phospholipase A2 (PLA2) that has high lipolytic activity. PLA2 catalyzes the calcium-dependent hydrolysis of the 2-acyl groups in 3-sn-phosphoglycerides. The protein is Acidic phospholipase A2 6 of Craspedocephalus gramineus (Bamboo pit viper).